The following is a 142-amino-acid chain: MKTYLAKPNEVPKKWYVIDATGKPLGRLAAKIAVILRGKHKPQFTPNVDTGDYVIVINAEKVVLTGKKLDKDGYRYHTKYPGGLKFIPYRRLLEKHPEKAIEIAVRGMLPKNRLRDRFMRKLKVYRGPNHPHAAQKPEVLEI.

The protein belongs to the universal ribosomal protein uL13 family. In terms of assembly, part of the 50S ribosomal subunit.

Functionally, this protein is one of the early assembly proteins of the 50S ribosomal subunit, although it is not seen to bind rRNA by itself. It is important during the early stages of 50S assembly. The sequence is that of Large ribosomal subunit protein uL13 from Caldicellulosiruptor bescii (strain ATCC BAA-1888 / DSM 6725 / KCTC 15123 / Z-1320) (Anaerocellum thermophilum).